A 345-amino-acid chain; its full sequence is Phosphoribosylformylglycinamidine cyclo-ligase (345 aa).

The protein belongs to the AIR synthase family.

It localises to the cytoplasm. The catalysed reaction is 2-formamido-N(1)-(5-O-phospho-beta-D-ribosyl)acetamidine + ATP = 5-amino-1-(5-phospho-beta-D-ribosyl)imidazole + ADP + phosphate + H(+). It functions in the pathway purine metabolism; IMP biosynthesis via de novo pathway; 5-amino-1-(5-phospho-D-ribosyl)imidazole from N(2)-formyl-N(1)-(5-phospho-D-ribosyl)glycinamide: step 2/2. In Escherichia coli O139:H28 (strain E24377A / ETEC), this protein is Phosphoribosylformylglycinamidine cyclo-ligase.